We begin with the raw amino-acid sequence, 683 residues long: Methionine--tRNA ligase (683 aa).

Positions 15-25 match the 'HIGH' region motif; it reads PYANGPIHLGH. Cys-146, Cys-149, Cys-159, and Cys-162 together coordinate Zn(2+). Positions 332 to 336 match the 'KMSKS' region motif; it reads KMSKS. ATP is bound at residue Lys-335. Residues 582–683 form the tRNA-binding domain; that stretch reads DFAKIDLRIA…EGALPGMRVK (102 aa).

This sequence belongs to the class-I aminoacyl-tRNA synthetase family. MetG type 1 subfamily. In terms of assembly, homodimer. The cofactor is Zn(2+).

The protein resides in the cytoplasm. It catalyses the reaction tRNA(Met) + L-methionine + ATP = L-methionyl-tRNA(Met) + AMP + diphosphate. Is required not only for elongation of protein synthesis but also for the initiation of all mRNA translation through initiator tRNA(fMet) aminoacylation. In Shewanella frigidimarina (strain NCIMB 400), this protein is Methionine--tRNA ligase.